We begin with the raw amino-acid sequence, 127 residues long: Fluoride-specific ion channel FluC (127 aa).

4 helical membrane-spanning segments follow: residues 4-24, 36-56, 68-88, and 99-119; these read SILA…FLGL, GTLL…AYFA, LIIT…AEVV, and AAGA…LGLF. The Na(+) site is built by Gly-75 and Thr-78.

This sequence belongs to the fluoride channel Fluc/FEX (TC 1.A.43) family.

Its subcellular location is the cell inner membrane. The catalysed reaction is fluoride(in) = fluoride(out). Its activity is regulated as follows. Na(+) is not transported, but it plays an essential structural role and its presence is essential for fluoride channel function. Its function is as follows. Fluoride-specific ion channel. Important for reducing fluoride concentration in the cell, thus reducing its toxicity. In Pseudomonas aeruginosa (strain UCBPP-PA14), this protein is Fluoride-specific ion channel FluC.